Here is a 508-residue protein sequence, read N- to C-terminus: Probable cytochrome P450 6d5 (508 aa).

Cysteine 453 is a binding site for heme.

Belongs to the cytochrome P450 family. It depends on heme as a cofactor.

The protein localises to the endoplasmic reticulum membrane. It is found in the microsome membrane. Functionally, may be involved in the metabolism of insect hormones and in the breakdown of synthetic insecticides. This Drosophila melanogaster (Fruit fly) protein is Probable cytochrome P450 6d5 (Cyp6d5).